The sequence spans 1530 residues: Synaptonemal complex protein 2 (1530 aa).

Over residues 439–461 (EKSKSPKEFAKPSKYIKNSDKGN) the composition is skewed to basic and acidic residues. A disordered region spans residues 439–480 (EKSKSPKEFAKPSKYIKNSDKGNRNNSQLEKTTPSKRKMSEA). S457 and S465 each carry phosphoserine. T471 carries the post-translational modification Phosphothreonine. S494, S519, S529, and S538 each carry phosphoserine. The disordered stretch occupies residues 496-555 (VLFSNTSIPPRRRRIKPPLQMTSSAEKPSVSQTSENRVDNAASLKSRSSEGRHRRDNIDK). Residues 515–530 (QMTSSAEKPSVSQTSE) are compositionally biased toward polar residues. Residues 542–555 (RSSEGRHRRDNIDK) are compositionally biased toward basic and acidic residues. T619 bears the Phosphothreonine mark. 3 disordered regions span residues 653 to 676 (QKSS…KKEQ), 693 to 717 (HNQQ…SDWP), and 755 to 795 (DKNP…SKGK). S660 and S664 each carry phosphoserine. Composition is skewed to polar residues over residues 695-713 (QQQN…NAKQ) and 755-764 (DKNPSASKNV). Phosphoserine is present on S936. Phosphothreonine is present on T938. Residues 962 to 1003 (QLIDYSRNKNVKNHKSGKSRSSLEKGQPSSKMTPSKNITKKM) form a disordered region. Residues 970–979 (KNVKNHKSGK) are compositionally biased toward basic residues. The span at 988–998 (QPSSKMTPSKN) shows a compositional bias: polar residues. S1136, S1138, S1145, S1161, and S1177 each carry phosphoserine. Position 1189 is a phosphothreonine (T1189). Residues S1204, S1234, S1253, S1295, and S1297 each carry the phosphoserine modification. At T1339 the chain carries Phosphothreonine.

The protein belongs to the SYCP2 family. Component of the lateral elements of synaptonemal complexes. Heterodimer with SYCP3. Interacts with SMC1A and SMC3. Interacts with TEX11. In terms of processing, phosphorylated.

The protein resides in the nucleus. It is found in the chromosome. In terms of biological role, major component of the axial/lateral elements of synaptonemal complexes (SCS) during meiotic prophase. Plays a role in the assembly of synaptonemal complexes. Required for normal meiotic chromosome synapsis during oocyte and spermatocyte development and for normal male and female fertility. Required for insertion of SYCP3 into synaptonemal complexes. May be involved in the organization of chromatin by temporarily binding to DNA scaffold attachment regions. Requires SYCP3, but not SYCP1, in order to be incorporated into the axial/lateral elements. The protein is Synaptonemal complex protein 2 (SYCP2) of Homo sapiens (Human).